The chain runs to 510 residues: Protein ERGIC-53 (510 aa).

Residues 1 to 30 form the signal peptide; the sequence is MAGSRRRGLQARVRPLFCALLLSLSRFVGG. At 31 to 477 the chain is on the lumenal side; sequence DGVGGDPAAG…ELPPFPSCLS (447 aa). Residues 44–267 enclose the L-type lectin-like domain; sequence RRFEYKYSFK…DVLSFLTFQL (224 aa). Serine 88 and aspartate 121 together coordinate a carbohydrate. Aspartate 152, phenylalanine 154, and asparagine 156 together coordinate Ca(2+). Positions 156 and 178 each coordinate a carbohydrate. Aspartate 181 lines the Ca(2+) pocket. Cysteine 190 and cysteine 230 are disulfide-bonded. Residue 251-253 participates in a carbohydrate binding; sequence GGL. Serine 425 is modified (phosphoserine). A helical membrane pass occupies residues 478-498; it reads TVHFIIFVVVQTVLFIGYIMY. At 499-510 the chain is on the cytoplasmic side; that stretch reads RSQQEAAAKKFF. Residues 499–510 form a mediates interaction with RAB3GAP1, RAB3GAP2 and UBXN6 region; that stretch reads RSQQEAAAKKFF. Residues 509 to 510 carry the ER export motif motif; it reads FF.

In terms of assembly, exists both as a covalent disulfide-linked homohexamer, and a complex of three disulfide-linked dimers non-covalently kept together. Interacts with MCFD2. May interact with TMEM115. Interacts with RAB3GAP1 and RAB3GAP2. Interacts with UBXN6. Interacts with SERPINA1/alpha1-antitrypsin. Interacts with BET1.

The protein resides in the endoplasmic reticulum-Golgi intermediate compartment membrane. It localises to the golgi apparatus membrane. The protein localises to the endoplasmic reticulum membrane. Its function is as follows. Mannose-specific lectin. May recognize sugar residues of glycoproteins, glycolipids, or glycosylphosphatidyl inositol anchors and may be involved in the sorting or recycling of proteins, lipids, or both. The LMAN1-MCFD2 complex forms a specific cargo receptor for the ER-to-Golgi transport of selected proteins. The chain is Protein ERGIC-53 (LMAN1) from Chlorocebus aethiops (Green monkey).